The following is a 138-amino-acid chain: Beta-lactamase HcpB (138 aa).

3 TPR repeats span residues 1-28 (MVGGGTVKKDLKKAIQYYVKACELNEMF), 57-94 (GNGCRFLGDFYENGKYVKKDLRKAAQYYSKACGLNDQD), and 97-130 (LILGYKQYAGKGVVKNEKQAVKTFEKACRLGSED). Disulfide bonds link Cys-22–Cys-30, Cys-52–Cys-60, Cys-88–Cys-96, and Cys-124–Cys-132.

This sequence belongs to the hcp beta-lactamase family.

It carries out the reaction a beta-lactam + H2O = a substituted beta-amino acid. Its function is as follows. Hydrolyzes 6-aminopenicillinic acid and 7-aminocephalosporanic acid (ACA) derivatives. This is Beta-lactamase HcpB (hcpB) from Helicobacter pylori (strain ATCC 700392 / 26695) (Campylobacter pylori).